Reading from the N-terminus, the 385-residue chain is Acetate kinase (385 aa).

Residue N8 participates in Mg(2+) binding. K15 serves as a coordination point for ATP. R85 serves as a coordination point for substrate. The active-site Proton donor/acceptor is the D142. ATP is bound by residues 200–204 (HLGNG), 275–277 (DMR), and 323–327 (GIGEN). E373 contributes to the Mg(2+) binding site.

It belongs to the acetokinase family. Homodimer. Mg(2+) serves as cofactor. The cofactor is Mn(2+).

It localises to the cytoplasm. It catalyses the reaction acetate + ATP = acetyl phosphate + ADP. It functions in the pathway metabolic intermediate biosynthesis; acetyl-CoA biosynthesis; acetyl-CoA from acetate: step 1/2. Its function is as follows. Catalyzes the formation of acetyl phosphate from acetate and ATP. Can also catalyze the reverse reaction. In Francisella tularensis subsp. holarctica (strain OSU18), this protein is Acetate kinase.